The primary structure comprises 277 residues: Large ribosomal subunit protein uL2 (277 aa).

The segment at glycine 222–lysine 277 is disordered.

This sequence belongs to the universal ribosomal protein uL2 family. In terms of assembly, part of the 50S ribosomal subunit. Forms a bridge to the 30S subunit in the 70S ribosome.

One of the primary rRNA binding proteins. Required for association of the 30S and 50S subunits to form the 70S ribosome, for tRNA binding and peptide bond formation. It has been suggested to have peptidyltransferase activity; this is somewhat controversial. Makes several contacts with the 16S rRNA in the 70S ribosome. This is Large ribosomal subunit protein uL2 from Xanthobacter autotrophicus (strain ATCC BAA-1158 / Py2).